Here is a 222-residue protein sequence, read N- to C-terminus: MADS-box transcription factor 26 (222 aa).

The MADS-box domain maps to 1–61 (MARGKVQLRR…GKLYDLATTG (61 aa)). The region spanning 85–176 (RMDPKQEAMV…QEKIVEQNGL (92 aa)) is the K-box domain.

Its subcellular location is the nucleus. Probable transcription factor. The chain is MADS-box transcription factor 26 (MADS26) from Oryza sativa subsp. indica (Rice).